Reading from the N-terminus, the 78-residue chain is Large ribosomal subunit protein bL28 (78 aa).

The segment at 1–23 (MSRVCQVTGKRPITGNNVSHSKR) is disordered.

This sequence belongs to the bacterial ribosomal protein bL28 family.

This is Large ribosomal subunit protein bL28 from Marinomonas sp. (strain MWYL1).